The sequence spans 317 residues: F-box protein FBW2 (317 aa).

The region spanning 7–54 (FRHWDELIPDALGLIFSHLPLQEVLTVVPRVCKAWNRAVTGPYCWQEI) is the F-box domain.

Part of a SCF (SKP1-cullin-F-box) protein ligase complex. Interacts with CUL1, CUL2 and SPK1B/ASK2.

The protein resides in the nucleus. The protein operates within protein modification; protein ubiquitination. Its function is as follows. Component of SCF(ASK-cullin-F-box) E3 ubiquitin ligase complexes, which may mediate the ubiquitination and subsequent proteasomal degradation of target proteins. This chain is F-box protein FBW2 (FBW2), found in Arabidopsis thaliana (Mouse-ear cress).